A 317-amino-acid chain; its full sequence is NADH kinase (317 aa).

The protein belongs to the NAD kinase family. As to quaternary structure, homodimer. As to expression, ubiquitous.

The protein resides in the cytoplasm. It carries out the reaction NADH + ATP = ADP + NADPH + H(+). Two-fold decrease in activity in the presence of PPi, iodoacetate or para-chloromercuribenzoate. In terms of biological role, phosphorylates specifically NADH. Can phosphorylate NAD with a 100-fold decrease in efficiency compared to NADH. Prefers ATP as nucleoside triphosphate substrate. Can also utilize UTP, GTP and CTP. Key source of the cellular reductant NADPH which is an important antioxidant factor. The sequence is that of NADH kinase (NADK3) from Arabidopsis thaliana (Mouse-ear cress).